We begin with the raw amino-acid sequence, 34 residues long: Antimicrobial peptide Alo-1 (34 aa).

3 disulfide bridges follow: C1–C18, C8–C22, and C17–C33.

The protein localises to the secreted. Its function is as follows. Has antifungal activity against C.glabrata. This chain is Antimicrobial peptide Alo-1, found in Acrocinus longimanus (Giant harlequin beetle).